The sequence spans 276 residues: Hydroxyethylthiazole kinase (276 aa).

Methionine 48 is a substrate binding site. Residues arginine 124 and threonine 175 each contribute to the ATP site. Glycine 202 contributes to the substrate binding site.

Belongs to the Thz kinase family. The cofactor is Mg(2+).

The catalysed reaction is 5-(2-hydroxyethyl)-4-methylthiazole + ATP = 4-methyl-5-(2-phosphooxyethyl)-thiazole + ADP + H(+). Its pathway is cofactor biosynthesis; thiamine diphosphate biosynthesis; 4-methyl-5-(2-phosphoethyl)-thiazole from 5-(2-hydroxyethyl)-4-methylthiazole: step 1/1. In terms of biological role, catalyzes the phosphorylation of the hydroxyl group of 4-methyl-5-beta-hydroxyethylthiazole (THZ). The sequence is that of Hydroxyethylthiazole kinase from Clostridium beijerinckii (strain ATCC 51743 / NCIMB 8052) (Clostridium acetobutylicum).